Consider the following 61-residue polypeptide: Small ribosomal subunit protein uS14C (61 aa).

Residues Cys24, Cys27, Cys40, and Cys43 each contribute to the Zn(2+) site.

The protein belongs to the universal ribosomal protein uS14 family. Zinc-binding uS14 subfamily. In terms of assembly, part of the 30S ribosomal subunit. Contacts proteins S3 and S10. Zn(2+) serves as cofactor.

Binds 16S rRNA, required for the assembly of 30S particles and may also be responsible for determining the conformation of the 16S rRNA at the A site. The chain is Small ribosomal subunit protein uS14C from Bacillus licheniformis (strain ATCC 14580 / DSM 13 / JCM 2505 / CCUG 7422 / NBRC 12200 / NCIMB 9375 / NCTC 10341 / NRRL NRS-1264 / Gibson 46).